The sequence spans 844 residues: MVTVMPLEMEKTISKLMFDFQRNSTSDDDSGCALEEYAWVPPGLKPEQVHQYYSCLPEEKVPYVNSPGEKLRIKQLLHQLPPHDNEVRYCNSLDEEEKRELKLFSSQRKRENLGRGNVRPFPVTMTGAICEQCGGQINGGDIAVFASRAGHGVCWHPPCFVCTVCNELLVDLIYFYQDGKIYCGRHHAECLKPRCAACDEIIFADECTEAEGRHWHMKHFCCFECETVLGGQRYIMKEGRPYCCHCFESLYAEYCDTCAQHIGIDQGQMTYDGQHWHATETCFCCAHCKKSLLGRPFLPKQGQIFCSRACSAGEDPNGSDSSDSAFQNARAKESRRSAKIGKNKGKTEEPMLNQHSQLQVSSNRLSADVDPLSLQMDMLSLSSQTPSLNRDPIWRSREEPYHYGNKMEQNQTQSPLQLLSQCNIRTSYSPGGQGAGAQPEMWGKHFSNPKRSSSLAMTGHAGSFIKECREDYYPGRLRSQESYSDMSSQSFSETRGSIQVPKYEEEEEEEGGLSTQQCRTRHPISSLKYTEDMTPTEQTPRGSMESLALSNATGLSADGGAKRQEHLSRFSMPDLSKDSGMNVSEKLSNMGTLNSSMQFRSAESVRSLLSAQQYQEMEGNLHQLSNPIGYRDLQSHGRMHQSFDFDGGMAGSKLPGQEGVRIQPMSERTRRRATSRDDNRRFRPHRSRRSRRSRSDNALHLASEREAISRLKDRPPLRAREDYDQFMRQRSFQESMGHGSRRDLYGQCPRTVSDLALQNAFGDRWGPYFAEYDWCSTCSSSSESDNEGYFLGEPIPQPARLRYVTSDELLHKYSSYGLPKSSTLGGRGQLHSRKRQKSKNCIIS.

Residues Phe-18–Thr-126 form the PET domain. Ser-92 carries the phosphoserine modification. 3 consecutive LIM zinc-binding domains span residues Ala-128–Pro-193, Pro-193–Glu-253, and Glu-253–Asn-317. 2 disordered regions span residues Glu-314–Pro-350 and Glu-481–Arg-519. Positions Gly-318–Gln-327 are enriched in polar residues. Residues Ser-319, Ser-321, and Ser-322 each carry the phosphoserine modification. The segment covering Glu-481–Glu-493 has biased composition (low complexity). Phosphothreonine is present on residues Thr-534, Thr-536, and Thr-539. Residues Ser-543, Ser-546, Ser-607, and Ser-642 each carry the phosphoserine modification. Residues Met-639–Ser-709 are disordered. Basic residues predominate over residues Phe-682–Arg-692. Residues Ser-693 to Ser-709 show a composition bias toward basic and acidic residues. Ser-731 carries the phosphoserine modification. Residues Ser-822–Ser-844 are disordered. Cys-841 is modified (cysteine methyl ester). The S-farnesyl cysteine moiety is linked to residue Cys-841. The propeptide at Ile-842 to Ser-844 is removed in mature form.

The protein belongs to the prickle / espinas / testin family. As to expression, expressed in brain, eye and testis. Additionally in fetal brain, adult cartilage, pancreatic islet, gastric cancer and uterus tumors.

Its subcellular location is the nucleus membrane. This Homo sapiens (Human) protein is Prickle-like protein 2 (PRICKLE2).